A 501-amino-acid chain; its full sequence is Phosphoethanolamine N-methyltransferase 1 (501 aa).

S-adenosyl-L-homocysteine-binding residues include G72, R77, D93, D118, V119, and N137. S170, T175, G176, R180, and Y187 together coordinate phosphocholine. Residues 256–257 and Y265 each bind N-methylethanolamine phosphate; that span reads QY. Y265 provides a ligand contact to phosphocholine. Residues V274, S275, G301, D323, D349, C350, and R366 each contribute to the S-adenosyl-L-homocysteine site. Residues Y397, Y411, R415, Y417, and K483 each coordinate phosphocholine. N-methylethanolamine phosphate is bound by residues Y397, Y411, 415–417, and K483; that span reads RGY.

This sequence belongs to the class I-like SAM-binding methyltransferase superfamily. PEAMT family.

The catalysed reaction is phosphoethanolamine + S-adenosyl-L-methionine = N-methylethanolamine phosphate + S-adenosyl-L-homocysteine + H(+). The enzyme catalyses N-methylethanolamine phosphate + S-adenosyl-L-methionine = N,N-dimethylethanolamine phosphate + S-adenosyl-L-homocysteine + H(+). It catalyses the reaction N,N-dimethylethanolamine phosphate + S-adenosyl-L-methionine = phosphocholine + S-adenosyl-L-homocysteine + H(+). It functions in the pathway phospholipid metabolism; phosphatidylcholine biosynthesis; phosphocholine from phosphoethanolamine: step 1/1. In terms of biological role, involved in phosphocholine biosynthesis. Catalyzes the N-methylation of phosphoethanolamine, phosphomonomethylethanolamine and phosphodimethylethanolamine, the three methylation steps required to convert phosphoethanolamine to phosphocholine (PC). May be involved in root development. This is Phosphoethanolamine N-methyltransferase 1 from Zea mays (Maize).